Here is a 73-residue protein sequence, read N- to C-terminus: Acyl carrier protein homolog (73 aa).

The Carrier domain maps to 1-72; the sequence is MAIKEWIITQ…DIIVLIEQKS (72 aa). Ser32 bears the O-(pantetheine 4'-phosphoryl)serine mark.

In terms of processing, 4'-phosphopantetheine is transferred from CoA to a specific serine of the apo-ACP-like protein.

It participates in lipid metabolism; fatty acid biosynthesis. In terms of biological role, carrier of the growing fatty acid chain in fatty acid biosynthesis. This Mycoplasmopsis pulmonis (strain UAB CTIP) (Mycoplasma pulmonis) protein is Acyl carrier protein homolog.